A 155-amino-acid chain; its full sequence is 6,7-dimethyl-8-ribityllumazine synthase (155 aa).

5-amino-6-(D-ribitylamino)uracil is bound by residues F22, A56–E58, and A80–I82. S85–T86 provides a ligand contact to (2S)-2-hydroxy-3-oxobutyl phosphate. H88 acts as the Proton donor in catalysis. F113 lines the 5-amino-6-(D-ribitylamino)uracil pocket. R127 serves as a coordination point for (2S)-2-hydroxy-3-oxobutyl phosphate.

It belongs to the DMRL synthase family.

It carries out the reaction (2S)-2-hydroxy-3-oxobutyl phosphate + 5-amino-6-(D-ribitylamino)uracil = 6,7-dimethyl-8-(1-D-ribityl)lumazine + phosphate + 2 H2O + H(+). The protein operates within cofactor biosynthesis; riboflavin biosynthesis; riboflavin from 2-hydroxy-3-oxobutyl phosphate and 5-amino-6-(D-ribitylamino)uracil: step 1/2. In terms of biological role, catalyzes the formation of 6,7-dimethyl-8-ribityllumazine by condensation of 5-amino-6-(D-ribitylamino)uracil with 3,4-dihydroxy-2-butanone 4-phosphate. This is the penultimate step in the biosynthesis of riboflavin. The chain is 6,7-dimethyl-8-ribityllumazine synthase from Caldicellulosiruptor bescii (strain ATCC BAA-1888 / DSM 6725 / KCTC 15123 / Z-1320) (Anaerocellum thermophilum).